Consider the following 416-residue polypeptide: Thyroid hormone receptor alpha (416 aa).

A disordered region spans residues 1-30; it reads MEPISNVEDPNSSEGDEKRWPDGPKRKRKN. The segment at 1-58 is modulating; sequence MEPISNVEDPNSSEGDEKRWPDGPKRKRKNSTCSVKSMSALSLSVQGYIPSYLEKDEP. The span at 15-24 shows a compositional bias: basic and acidic residues; that stretch reads GDEKRWPDGP. Zn(2+) is bound by residues Cys59, Cys62, Cys76, Cys79, Cys97, Cys103, Cys113, and Cys116. 2 NR C4-type zinc fingers span residues 59 to 79 and 97 to 121; these read CVVCGDKATGYHYRCITCEGC and CKYDGCCIIDKITRNQCQLCRFRKC. Positions 59–133 form a DNA-binding region, nuclear receptor; that stretch reads CVVCGDKATG…VCMAMDLVLD (75 aa). Residues 169 to 413 enclose the NR LBD domain; the sequence is SEWELIRHVT…PPLFLEVFED (245 aa). 3,3',5-triiodo-L-thyronine-binding residues include Arg234 and Ser283.

The protein belongs to the nuclear hormone receptor family. NR1 subfamily.

The protein localises to the nucleus. In terms of biological role, nuclear hormone receptor that can act as a repressor or activator of transcription. High affinity receptor for thyroid hormones, including triiodothyronine and thyroxine. This Salmo salar (Atlantic salmon) protein is Thyroid hormone receptor alpha (thra1).